The primary structure comprises 192 residues: Cytidylate kinase (192 aa).

Position 7-15 (7-15 (GPPGAGKST)) interacts with ATP.

It belongs to the cytidylate kinase family. Type 2 subfamily.

Its subcellular location is the cytoplasm. The enzyme catalyses CMP + ATP = CDP + ADP. It catalyses the reaction dCMP + ATP = dCDP + ADP. The sequence is that of Cytidylate kinase from Haloquadratum walsbyi (strain DSM 16790 / HBSQ001).